Reading from the N-terminus, the 97-residue chain is Co-chaperonin GroES (97 aa).

Belongs to the GroES chaperonin family. As to quaternary structure, heptamer of 7 subunits arranged in a ring. Interacts with the chaperonin GroEL.

It localises to the cytoplasm. In terms of biological role, together with the chaperonin GroEL, plays an essential role in assisting protein folding. The GroEL-GroES system forms a nano-cage that allows encapsulation of the non-native substrate proteins and provides a physical environment optimized to promote and accelerate protein folding. GroES binds to the apical surface of the GroEL ring, thereby capping the opening of the GroEL channel. This is Co-chaperonin GroES from Buchnera aphidicola subsp. Tetraneura caerulescens.